The primary structure comprises 394 residues: Putative pectate lyase 17 (394 aa).

Positions 1–22 (MTHFTVSCLLVALFLCQSLVHA) are cleaved as a signal peptide. Ca(2+) contacts are provided by D192, D216, and D220. The active site involves R272.

The protein belongs to the polysaccharide lyase 1 family. Ca(2+) serves as cofactor.

It carries out the reaction Eliminative cleavage of (1-&gt;4)-alpha-D-galacturonan to give oligosaccharides with 4-deoxy-alpha-D-galact-4-enuronosyl groups at their non-reducing ends.. Its pathway is glycan metabolism; pectin degradation; 2-dehydro-3-deoxy-D-gluconate from pectin: step 2/5. The chain is Putative pectate lyase 17 from Arabidopsis thaliana (Mouse-ear cress).